The primary structure comprises 449 residues: Putative F-box/FBD/LRR-repeat protein At3g49480 (449 aa).

The 49-residue stretch at 11-59 (EDRISSLPDDLLVKILLCVPTKDAAATTFLSKRWRFVWRMLPRLNYIET) folds into the F-box domain. LRR repeat units lie at residues 60–91 (TSDV…WIDL), 153–180 (RLTL…DLFC), 182–206 (VYKD…KVTR), 235–260 (FRED…HIFD), 275–302 (VTVV…ALSP), and 327–352 (SEYD…LVDS). The FBD domain maps to 364–412 (WNQPSSIPRCLSSHLEIFEWDGYVGREDEKKIIRYILENSKYLKTAGIS).

This Arabidopsis thaliana (Mouse-ear cress) protein is Putative F-box/FBD/LRR-repeat protein At3g49480.